The chain runs to 353 residues: E3 ubiquitin-protein ligase TRIM63 (353 aa).

The RING-type zinc finger occupies 23–79 (CPICLEMFTKPVVILPCQHNLCRKCANDIFQAANPYWTSRGSSVSMSGGRFRCPTCR). The interaction with TTN stretch occupies residues 74–218 (RCPTCRHEVI…LSQKFDTLYA (145 aa)). The B box-type zinc finger occupies 117-159 (GSHPMCKEHEDEKINIYCLTCEVPTCSMCKVFGIHKACEVAPL). Zn(2+) contacts are provided by Cys-122, His-125, Cys-145, and His-151. Positions 207-269 (EELSQKFDTL…VETAIQSLDE (63 aa)) form a coiled coil. The COS domain occupies 267 to 325 (LDEPGGATFLLTAKQLIKSIVEASKGCQLGKTEQGFENMDFFTLDLEHIADALRAIDFG). Acidic residues predominate over residues 326–344 (TDEEEEEFIEEEDQEEEES). Residues 326-353 (TDEEEEEFIEEEDQEEEESTEGKEEGHQ) form a disordered region.

In terms of assembly, homodimer. Homooligomer and heterooligomer. Interacts with SUMO2, titin/TTN and GMEB1. Interacts with TRIM54 and probably with TRIM55 and TNNI3. Forms a ternary complex with RACK1 and PRKCE. Interacts with CKM. As to expression, muscle specific. Selectively expressed in heart and skeletal muscle. Also expressed in the iris.

It localises to the cytoplasm. The protein localises to the nucleus. The protein resides in the myofibril. It is found in the sarcomere. Its subcellular location is the m line. It localises to the z line. The enzyme catalyses S-ubiquitinyl-[E2 ubiquitin-conjugating enzyme]-L-cysteine + [acceptor protein]-L-lysine = [E2 ubiquitin-conjugating enzyme]-L-cysteine + N(6)-ubiquitinyl-[acceptor protein]-L-lysine.. The protein operates within protein modification; protein ubiquitination. Its function is as follows. E3 ubiquitin ligase. Mediates the ubiquitination and subsequent proteasomal degradation of CKM, GMEB1 and HIBADH. Regulates the proteasomal degradation of muscle proteins under amino acid starvation, where muscle protein is catabolized to provide other organs with amino acids. Inhibits de novo skeletal muscle protein synthesis under amino acid starvation. Regulates proteasomal degradation of cardiac troponin I/TNNI3 and probably of other sarcomeric-associated proteins. May play a role in striated muscle atrophy and hypertrophy by regulating an anti-hypertrophic PKC-mediated signaling pathway. May regulate the organization of myofibrils through TTN in muscle cells. In Homo sapiens (Human), this protein is E3 ubiquitin-protein ligase TRIM63 (TRIM63).